A 466-amino-acid chain; its full sequence is Argininosuccinate lyase (466 aa).

The protein belongs to the lyase 1 family. Argininosuccinate lyase subfamily.

The protein localises to the cytoplasm. The enzyme catalyses 2-(N(omega)-L-arginino)succinate = fumarate + L-arginine. It participates in amino-acid biosynthesis; L-arginine biosynthesis; L-arginine from L-ornithine and carbamoyl phosphate: step 3/3. The protein is Argininosuccinate lyase of Brucella abortus (strain S19).